The following is a 269-amino-acid chain: MKIGLIVSRVDEASIGIWSMLKGMVKFKEINTNEYSSDLALALVSDKDIVYVDEADEWARVNDIDLLLFLSRHEMKNPKPLITFHTPGNWTNDVELGGKPGQVAISEPRVLTNLFREAYRRIGELNGYSVTLEATHHGPFVDKPVVFVEIGSTSNEWRDPKAQEFLASLVFDLLNNTDKYINDGKDAAVSIGDLHYTTLVNHIINGEYDVGHMVPKYIKPTPTIIKMAVERNTVRPRIGIIHWKSLDAESRVMSEKELSNLGLTVIKRR.

The protein belongs to the DtdA deacylase family. As to quaternary structure, monomer. Zn(2+) serves as cofactor.

It catalyses the reaction a D-aminoacyl-tRNA + H2O = a tRNA + a D-alpha-amino acid + H(+). It carries out the reaction glycyl-tRNA(Ala) + H2O = tRNA(Ala) + glycine + H(+). D-aminoacyl-tRNA deacylase with broad substrate specificity. By recycling D-aminoacyl-tRNA to D-amino acids and free tRNA molecules, this enzyme counteracts the toxicity associated with the formation of D-aminoacyl-tRNA entities in vivo. In Caldivirga maquilingensis (strain ATCC 700844 / DSM 13496 / JCM 10307 / IC-167), this protein is D-aminoacyl-tRNA deacylase.